The chain runs to 212 residues: Pyridoxine/pyridoxamine 5'-phosphate oxidase (212 aa).

FMN-binding positions include 59–64 (RMVLMK), 74–75 (YS), K81, and Q103. K64 contacts substrate. Substrate contacts are provided by Y121 and R125. Residues 138 to 139 (QS) and W183 contribute to the FMN site. Residue 189-191 (RLH) coordinates substrate. Residue R193 participates in FMN binding.

Belongs to the pyridoxamine 5'-phosphate oxidase family. Homodimer. It depends on FMN as a cofactor.

The enzyme catalyses pyridoxamine 5'-phosphate + O2 + H2O = pyridoxal 5'-phosphate + H2O2 + NH4(+). The catalysed reaction is pyridoxine 5'-phosphate + O2 = pyridoxal 5'-phosphate + H2O2. Its pathway is cofactor metabolism; pyridoxal 5'-phosphate salvage; pyridoxal 5'-phosphate from pyridoxamine 5'-phosphate: step 1/1. The protein operates within cofactor metabolism; pyridoxal 5'-phosphate salvage; pyridoxal 5'-phosphate from pyridoxine 5'-phosphate: step 1/1. In terms of biological role, catalyzes the oxidation of either pyridoxine 5'-phosphate (PNP) or pyridoxamine 5'-phosphate (PMP) into pyridoxal 5'-phosphate (PLP). This is Pyridoxine/pyridoxamine 5'-phosphate oxidase from Rhodopseudomonas palustris (strain BisB5).